The following is a 107-amino-acid chain: Circadian clock oscillator protein KaiB (107 aa).

This sequence belongs to the KaiB family. May undergo a major conformational rearrangment; in the free state forms homooligomers. When bound to KaiC switches to a monomeric thioredoxin-fold (KaiB(fs)). The active oscillator complex is probably KaiC(6):KaiB(6).

Component of the KaiBC clock protein complex, which constitutes the main circadian regulator in cyanobacteria; it may modify the ATPase activity of KaiC. In terms of biological role, may be a metamorphic protein which reversibly switches between an inactive tetrameric fold and a rare, thioredoxin-like monomeric fold (KaiB(fs)). KaiB(fs) binds phospho-KaiC, and perhaps clock output effectors. The protein is Circadian clock oscillator protein KaiB of Prochlorococcus marinus (strain NATL2A).